The chain runs to 683 residues: Cytoskeleton-associated protein 2 (683 aa).

Disordered stretches follow at residues 1–28 (MSTP…QRRQ) and 153–175 (NSKK…KKPV). Residues serine 178 and serine 190 each carry the phosphoserine modification. Disordered regions lie at residues 214-236 (KATK…SSNM) and 336-403 (EKSE…EKPV). Polar residues predominate over residues 219-236 (QPVNTSSVTVKSNRSSNM). 2 stretches are compositionally biased toward basic and acidic residues: residues 336–345 (EKSEPVDQRR) and 362–376 (ETSE…EWKA). The residue at position 534 (serine 534) is a Phosphoserine. Threonine 579 and threonine 582 each carry phosphothreonine. Serine 595 is modified (phosphoserine). Phosphothreonine occurs at positions 596 and 597. Tyrosine 599 bears the Phosphotyrosine mark. Residue serine 602 is modified to Phosphoserine.

This sequence belongs to the CKAP2 family. Associates with alpha- and beta-tubulins. As to expression, abundant in testis, thymus, and in tumor derived cell lines, while barely detectable in liver, prostate, and kidney.

It localises to the cytoplasm. The protein localises to the cytoskeleton. The protein resides in the spindle. It is found in the spindle pole. Its function is as follows. Possesses microtubule stabilizing properties. Involved in regulating aneuploidy, cell cycling, and cell death in a p53/TP53-dependent manner. The chain is Cytoskeleton-associated protein 2 from Homo sapiens (Human).